Reading from the N-terminus, the 902-residue chain is Viral-enhancing factor (902 aa).

Residues 27–330 enclose the Peptidase M60 domain; it reads HRRTEVGVVL…IFAWLYNPQR (304 aa). N-linked (GlcNAc...) asparagine; by host glycosylation is found at asparagine 73, asparagine 265, asparagine 278, asparagine 339, asparagine 540, asparagine 593, asparagine 594, asparagine 620, asparagine 782, and asparagine 840.

In terms of biological role, involved in disruption of the peritrophic membrane and fusion of nucleocapsids with midgut cells. This Heliothis (HaGV) protein is Viral-enhancing factor (VEF).